The chain runs to 100 residues: MPRPKKPRTIGCMPKASCFKPNGIPAHNLPCIALEADELEALRLADVLQLHQLEAAQSMGVSRQTFGNIIKRARNKVALCLVEGKVLTLPNQSQDKEKEA.

Belongs to the UPF0251 family.

The protein is UPF0251 protein VVA1436 of Vibrio vulnificus (strain YJ016).